The primary structure comprises 96 residues: uncharacterized protein (96 aa).

This is an uncharacterized protein from Saimiriine herpesvirus 2 (strain 11) (SaHV-2).